Consider the following 606-residue polypeptide: Pyruvate decarboxylase 2 (606 aa).

Positions 68 and 155 each coordinate substrate. The segment at 433–515 (DSWFNCQKLK…FLINNGGYTI (83 aa)) is thiamine pyrophosphate binding. The Mg(2+) site is built by D483, N510, and G512. Residue E516 participates in substrate binding.

Belongs to the TPP enzyme family. In terms of assembly, homotetramer. It depends on a metal cation as a cofactor. Thiamine diphosphate serves as cofactor.

The catalysed reaction is a 2-oxocarboxylate + H(+) = an aldehyde + CO2. The protein is Pyruvate decarboxylase 2 (PDC2) of Oryza sativa subsp. indica (Rice).